The primary structure comprises 348 residues: D-erythrose-4-phosphate dehydrogenase (348 aa).

NAD(+)-binding positions include 12–13 (RI) and arginine 81. Residues 154–156 (SCT), arginine 200, 213–214 (TK), and arginine 236 contribute to the substrate site. The Nucleophile role is filled by cysteine 155. NAD(+) is bound at residue asparagine 318.

Belongs to the glyceraldehyde-3-phosphate dehydrogenase family. Epd subfamily. In terms of assembly, homotetramer.

It localises to the cytoplasm. The catalysed reaction is D-erythrose 4-phosphate + NAD(+) + H2O = 4-phospho-D-erythronate + NADH + 2 H(+). Its pathway is cofactor biosynthesis; pyridoxine 5'-phosphate biosynthesis; pyridoxine 5'-phosphate from D-erythrose 4-phosphate: step 1/5. Functionally, catalyzes the NAD-dependent conversion of D-erythrose 4-phosphate to 4-phosphoerythronate. The polypeptide is D-erythrose-4-phosphate dehydrogenase (Salmonella paratyphi B (strain ATCC BAA-1250 / SPB7)).